The chain runs to 1669 residues: Dystrophin, isoform B (1669 aa).

Over residues 1-11 (MTAKPPPPIPP) the composition is skewed to pro residues. Disordered stretches follow at residues 1–28 (MTAK…LAPE), 43–243 (RGQQ…SEDA), 327–356 (RAQA…RSTI), 389–417 (GGGG…MPLS), and 481–508 (SGAL…NSSG). A compositionally biased stretch (polar residues) spans 53-62 (SQEQHATNTL). The segment covering 118-131 (GLPPTMRQPPPLPR) has biased composition (pro residues). Residues 132-147 (KPASTQSSAQNSAQSS) show a composition bias toward low complexity. Residues 153–166 (KFKDKPPPPPEKHS) show a composition bias toward basic and acidic residues. Low complexity-rich tracts occupy residues 328–347 (AQAQ…SNSQ) and 396–405 (STGNAVANSG). Residues 485–500 (SREELRMRRRSSHDET) show a composition bias toward basic and acidic residues. Spectrin repeat units lie at residues 541–643 (QRFE…KQLH), 650–747 (QSFD…NRLE), 754–883 (NALL…HRLD), and 890–990 (RQFQ…KVLC). The tract at residues 827–851 (VSDTSDTEANHDSDSRYMSAEEQSR) is disordered. Residues 994-1024 (AQQTHENGDDGRTTSNSGTIGPLPNLGQSVK) are disordered. The 34-residue stretch at 1021-1054 (QSVKPPWERATTAANVPYYIDHERETTHWDHPEM) folds into the WW domain. The ZZ-type zinc-finger motif lies at 1279–1335 (KHQAKCNICKEYPIVGFRYRCLKCFNFDMCQKCFFFGRNAKNHKLTHPMHEYCTTTT). Zn(2+)-binding residues include Cys1284, Cys1287, Cys1299, Cys1302, Cys1308, Cys1311, His1321, and His1325. Phosphoserine is present on Ser1379. 2 disordered regions span residues 1488-1516 (EQSG…GEQG) and 1559-1669 (DEPN…ELQK). Composition is skewed to polar residues over residues 1497-1509 (NGMQ…MTGL) and 1580-1611 (ALNS…QQNG). The span at 1630–1641 (QELESINDDLED) shows a compositional bias: acidic residues. Residues 1642–1660 (SSSSNTTNTTTTTTTTATT) show a composition bias toward low complexity.

In terms of assembly, component of the dystrophin associated protein complex (DAPC). Interacts with Dg, via the Dg WW domain binding sites. As to expression, expressed in neuronally derived tissues, mainly the CNS and the brain of stage 16 embryos. Lower level expression is seen in the sensory organs. Expression is absent from the musculature. In larvae, expression is predominant throughout the neuropil and brain and in the eye antennal disks.

The protein localises to the cell membrane. It is found in the sarcolemma. It localises to the cytoplasm. Its subcellular location is the cytoskeleton. Required for the maintenance of appropriate synaptic retrograde communication and the stabilization of muscle cell architecture or physiology. May play a role in anchoring the cytoskeleton to the plasma membrane. This Drosophila melanogaster (Fruit fly) protein is Dystrophin, isoform B (Dys).